Here is a 450-residue protein sequence, read N- to C-terminus: Protein tweety homolog 1 (450 aa).

The Extracellular portion of the chain corresponds to 1-43 (MGAPPGYRPSAWVHLLHQLPRADFQLRPVPSGFAPQEQEYQQA). The chain crosses the membrane as a helical span at residues 44–64 (LLLVAALAGLGLGLSLIFIAV). The Cytoplasmic segment spans residues 65-88 (YLIRFCCCRPPEPPGSKTPSPGGG). Residues 89-109 (CVTWSCIVALLAGCIGIGIGF) form a helical membrane-spanning segment. The Extracellular portion of the chain corresponds to 110-214 (YGNSETSDGV…DVSFVEEYRW (105 aa)). N-linked (GlcNAc...) asparagine glycosylation occurs at Asn-130. A helical membrane pass occupies residues 215–235 (LAYVLLLLLELLVCLFTLLGL). Residues 236–240 (AKQSK) are Cytoplasmic-facing. Residues 241–261 (WLVIVMTVMSLLVLVLSWGSM) form a helical membrane-spanning segment. At 262-390 (GLEAATAVGL…LRGLCEDALE (129 aa)) the chain is on the extracellular side. N-linked (GlcNAc...) asparagine glycans are attached at residues Asn-284 and Asn-355. Cys-303 and Cys-370 are oxidised to a cystine. Residues 391 to 411 (GLLFLLLFSLLSAGALATALC) traverse the membrane as a helical segment. Over 412–450 (SLPRAWALFPPSDDYDDTDDDDPFNPQESKRFVQWQSSI) the chain is Cytoplasmic. Residues 428–450 (DTDDDDPFNPQESKRFVQWQSSI) are disordered. A Phosphoserine modification is found at Ser-440.

The protein belongs to the tweety family. As to quaternary structure, homotetramer; disulfide-linked. Homodimer. N-glycosylated. Contains high-mannose, hybrid and complex oligosaccharides.

It localises to the cell membrane. It carries out the reaction chloride(in) = chloride(out). The enzyme catalyses L-glutamate(out) = L-glutamate(in). In terms of biological role, calcium-independent, swelling-dependent volume-regulated anion channel (VRAC-swell) which plays a pivotal role in the process of regulatory volume decrease (RVD) in the brain through the efflux of anions like chloride and organic osmolytes like glutamate. The polypeptide is Protein tweety homolog 1 (TTYH1) (Macaca fascicularis (Crab-eating macaque)).